A 1145-amino-acid polypeptide reads, in one-letter code: DNA polymerase II large subunit (1145 aa).

The interval 284–303 (KSSSESDEDEETDGKPKIKP) is disordered.

It belongs to the archaeal DNA polymerase II family. As to quaternary structure, heterodimer of a large subunit and a small subunit.

It carries out the reaction DNA(n) + a 2'-deoxyribonucleoside 5'-triphosphate = DNA(n+1) + diphosphate. It catalyses the reaction Exonucleolytic cleavage in the 3'- to 5'-direction to yield nucleoside 5'-phosphates.. In terms of biological role, possesses two activities: a DNA synthesis (polymerase) and an exonucleolytic activity that degrades single-stranded DNA in the 3'- to 5'-direction. Has a template-primer preference which is characteristic of a replicative DNA polymerase. The sequence is that of DNA polymerase II large subunit from Methanococcoides burtonii (strain DSM 6242 / NBRC 107633 / OCM 468 / ACE-M).